The primary structure comprises 66 residues: U10-theraphotoxin-Cg1a 3 (66 aa).

The signal sequence occupies residues 1-21; sequence MKTSVLFVIFGLALLFCLSFA. The propeptide occupies 22-29; sequence DELEDTGR. Cystine bridges form between C31–C46, C38–C51, and C45–C58.

Belongs to the neurotoxin 10 (Hwtx-1) family. 29 (Jztx-13) subfamily. As to expression, expressed by the venom gland.

The protein localises to the secreted. Probable ion channel inhibitor. The chain is U10-theraphotoxin-Cg1a 3 from Chilobrachys guangxiensis (Chinese earth tiger tarantula).